A 380-amino-acid chain; its full sequence is Erythronate-4-phosphate dehydrogenase (380 aa).

The substrate site is built by S45 and T66. 2 residues coordinate NAD(+): D146 and T174. Residue R207 is part of the active site. D231 contributes to the NAD(+) binding site. E236 is an active-site residue. The active-site Proton donor is H253. An NAD(+)-binding site is contributed by G256. Residue Y257 participates in substrate binding.

It belongs to the D-isomer specific 2-hydroxyacid dehydrogenase family. PdxB subfamily. Homodimer.

It localises to the cytoplasm. It catalyses the reaction 4-phospho-D-erythronate + NAD(+) = (R)-3-hydroxy-2-oxo-4-phosphooxybutanoate + NADH + H(+). The protein operates within cofactor biosynthesis; pyridoxine 5'-phosphate biosynthesis; pyridoxine 5'-phosphate from D-erythrose 4-phosphate: step 2/5. Catalyzes the oxidation of erythronate-4-phosphate to 3-hydroxy-2-oxo-4-phosphonooxybutanoate. In Pseudomonas fluorescens (strain ATCC BAA-477 / NRRL B-23932 / Pf-5), this protein is Erythronate-4-phosphate dehydrogenase.